The primary structure comprises 417 residues: Prostaglandin E2 receptor EP3 subtype (417 aa).

The Extracellular portion of the chain corresponds to 1–52 (MKATRDHASAPFCTRFNHSDPGIWAAERAVEAPNNLTLPPEPSEDCGSVSVA). Residues Asn-17 and Asn-35 are each glycosylated (N-linked (GlcNAc...) asparagine). A helical membrane pass occupies residues 53–77 (FSMTMMITGFVGNALAITLVSKSYR). The Cytoplasmic portion of the chain corresponds to 78 to 90 (RREGKRKKSFLLC). A helical membrane pass occupies residues 91–111 (IGWLALTDMVGQLLTSPVVIV). The Extracellular segment spans residues 112-130 (LYLSHQRWEQLDPSGRLCT). The chain crosses the membrane as a helical span at residues 131–152 (FFGLTMTVFGLSSLFIASAMAV). Over 153–174 (ERALATRAPHWYSSHMKTSVTR) the chain is Cytoplasmic. Residues 175–196 (AVLLGVWLAVLAFALLPVLGVG) form a helical membrane-spanning segment. At 197 to 226 (QYTIQWPGTWCFISTGPGGNGTNSRQNWGN) the chain is on the extracellular side. A glycan (N-linked (GlcNAc...) asparagine) is linked at Asn-216. Residues 227 to 252 (VFFASAFAILGLSALVVTFACNLATI) traverse the membrane as a helical segment. The Cytoplasmic segment spans residues 253–282 (KALVSRCRAKATASQSSAQWGRITTETAIQ). Residues 283–306 (LMGIMCVLSVCWSPLLIMMLKMIF) form a helical membrane-spanning segment. Asn-307 carries an N-linked (GlcNAc...) asparagine glycan. The Extracellular portion of the chain corresponds to 307-326 (NHTSVEHCKTYTENQDECNF). The chain crosses the membrane as a helical span at residues 327–348 (FLIAVRLASLNQILDPWVYLLL). Over 349–417 (RKILLQKFCQ…HIYLHTLEHQ (69 aa)) the chain is Cytoplasmic.

This sequence belongs to the G-protein coupled receptor 1 family. Interacts (via C-terminus) with MKLN1.

The protein localises to the cell membrane. Receptor for prostaglandin E2 (PGE2). The various isoforms have identical ligand binding properties but interact with different second messenger systems: isoform EP3A couples to G(i)/G(o) proteins; isoform EP3B and isoform EP3C couple to G(s), and isoform EP3D couples to G(i), G(s) and G(p). Required for normal development of fever in response to pyrinogens, including IL1B, prostaglandin E2 and bacterial lipopolysaccharide (LPS). Required for normal potentiation of platelet aggregation by prostaglandin E2, and thus plays a role in the regulation of blood coagulation. Required for increased HCO3(-) secretion in the duodenum in response to mucosal acidification, and thereby contributes to the protection of the mucosa against acid-induced ulceration. Not required for normal kidney function, normal urine volume and osmolality. This Bos taurus (Bovine) protein is Prostaglandin E2 receptor EP3 subtype (PTGER3).